A 466-amino-acid chain; its full sequence is Coagulation factor VII (466 aa).

A signal peptide spans 1 to 20 (MVSQALRLLCLLLGLQGCLA). The propeptide occupies 21–60 (AGGVAEASGGETRDXXWKPGPHRVFITQEEAHGVLHRRRR). The 45-residue stretch at 61–105 (ANAFLEELRPGSLERECKEEQCSFEEAREIFKDLERTKLFWISYS) folds into the Gla domain. Glutamate 66, glutamate 67, glutamate 74, glutamate 76, glutamate 79, glutamate 80, glutamate 85, glutamate 86, glutamate 89, and glutamate 95 each carry 4-carboxyglutamate. A disulfide bridge connects residues cysteine 77 and cysteine 82. An EGF-like 1; calcium-binding domain is found at 106–142 (DGDQCASSPCQNGGSCKDQLQSYICFCLPAFEGRNCE). 10 disulfide bridges follow: cysteine 110–cysteine 121, cysteine 115–cysteine 130, cysteine 132–cysteine 141, cysteine 151–cysteine 162, cysteine 158–cysteine 172, cysteine 174–cysteine 187, cysteine 195–cysteine 322, cysteine 219–cysteine 224, cysteine 238–cysteine 254, and cysteine 370–cysteine 389. A glycan (O-linked (Glc...) serine; alternate) is linked at serine 112. The O-linked (Xyl...) serine; alternate glycan is linked to serine 112. Residue serine 120 is glycosylated (O-linked (Fuc) serine). Aspartate 123 is modified ((3R)-3-hydroxyaspartate). The region spanning 147 to 188 (DQLICVNENGGCEQYCSDHTGTKRSCRCHEGYSLLADGVSCT) is the EGF-like 2 domain. N-linked (GlcNAc...) asparagine glycosylation occurs at asparagine 205. The region spanning 213-452 (IVGGKVCPKG…YIEWLQKLMR (240 aa)) is the Peptidase S1 domain. Catalysis depends on charge relay system residues histidine 253 and aspartate 302. N-linked (GlcNAc...) asparagine glycosylation is present at asparagine 382. Residue aspartate 398 coordinates substrate. Cysteine 400 and cysteine 428 are joined by a disulfide. Catalysis depends on serine 404, which acts as the Charge relay system.

Belongs to the peptidase S1 family. Heterodimer of a light chain and a heavy chain linked by a disulfide bond. The vitamin K-dependent, enzymatic carboxylation of some glutamate residues allows the modified protein to bind calcium. Post-translationally, the iron and 2-oxoglutarate dependent 3-hydroxylation of aspartate and asparagine is (R) stereospecific within EGF domains. In terms of processing, O-glycosylated. O-fucosylated by POFUT1 on a conserved serine or threonine residue found in the consensus sequence C2-X(4,5)-[S/T]-C3 of EGF domains, where C2 and C3 are the second and third conserved cysteines. Can be either O-glucosylated or O-xylosylated at Ser-112 by POGLUT1.

It localises to the secreted. It carries out the reaction Selective cleavage of Arg-|-Ile bond in factor X to form factor Xa.. In terms of biological role, initiates the extrinsic pathway of blood coagulation. Serine protease that circulates in the blood in a zymogen form. Factor VII is converted to factor VIIa by factor Xa, factor XIIa, factor IXa, or thrombin by minor proteolysis. In the presence of tissue factor and calcium ions, factor VIIa then converts factor X to factor Xa by limited proteolysis. Factor VIIa also converts factor IX to factor IXa in the presence of tissue factor and calcium. This Pan troglodytes (Chimpanzee) protein is Coagulation factor VII (F7).